Consider the following 207-residue polypeptide: Cytochrome c biogenesis ATP-binding export protein CcmA (207 aa).

An ABC transporter domain is found at 4–207 (LEVRELLCER…RISLTQTRAV (204 aa)). Residue 36 to 43 (GSNGAGKT) coordinates ATP.

The protein belongs to the ABC transporter superfamily. CcmA exporter (TC 3.A.1.107) family. The complex is composed of two ATP-binding proteins (CcmA) and two transmembrane proteins (CcmB).

The protein localises to the cell inner membrane. It catalyses the reaction heme b(in) + ATP + H2O = heme b(out) + ADP + phosphate + H(+). Its function is as follows. Part of the ABC transporter complex CcmAB involved in the biogenesis of c-type cytochromes; once thought to export heme, this seems not to be the case, but its exact role is uncertain. Responsible for energy coupling to the transport system. The sequence is that of Cytochrome c biogenesis ATP-binding export protein CcmA from Escherichia coli O157:H7.